Reading from the N-terminus, the 445-residue chain is UDP-glucuronic acid decarboxylase 2 (445 aa).

Ala-2 carries the N-acetylalanine modification. The Cytoplasmic portion of the chain corresponds to 2–43 (ASELINRRHETDQPTADAYYPKPIKPWFTVTRPMRYMLREQR). A helical; Signal-anchor for type II membrane protein membrane pass occupies residues 44 to 64 (LIFVLVGIAIATLVFTIFPRS). Over 65-445 (TQSTPYSDPF…AATTTKTTSA (381 aa)) the chain is Lumenal. 149–174 (DNFFTGRKENVMHHFSNPNFEMIRHD) serves as a coordination point for NAD(+). A substrate-binding site is contributed by Arg-258. The Proton acceptor role is filled by Tyr-261. 261–265 (YDEGK) provides a ligand contact to NAD(+). Residue Asn-290 participates in substrate binding. Position 302 (Arg-302) interacts with NAD(+). Residues 303-307 (VVSNF), 320-327 (YGDGKQTR), and 387-391 (DPHKR) contribute to the substrate site.

It belongs to the NAD(P)-dependent epimerase/dehydratase family. UDP-glucuronic acid decarboxylase subfamily. In terms of assembly, homodimer. It depends on NAD(+) as a cofactor. Ubiquitous.

The protein localises to the golgi apparatus. It is found in the golgi stack membrane. It catalyses the reaction UDP-alpha-D-glucuronate + H(+) = UDP-alpha-D-xylose + CO2. It functions in the pathway nucleotide-sugar biosynthesis; UDP-alpha-D-xylose biosynthesis; UDP-alpha-D-xylose from UDP-alpha-D-glucuronate: step 1/1. In terms of biological role, catalyzes the NAD-dependent decarboxylation of UDP-glucuronic acid to UDP-xylose. Necessary for the biosynthesis of the core tetrasaccharide in glycosaminoglycan biosynthesis. This Arabidopsis thaliana (Mouse-ear cress) protein is UDP-glucuronic acid decarboxylase 2 (UXS2).